The chain runs to 557 residues: Formate--tetrahydrofolate ligase (557 aa).

67–74 lines the ATP pocket; it reads TPAGEGKT.

The protein belongs to the formate--tetrahydrofolate ligase family.

The enzyme catalyses (6S)-5,6,7,8-tetrahydrofolate + formate + ATP = (6R)-10-formyltetrahydrofolate + ADP + phosphate. It functions in the pathway one-carbon metabolism; tetrahydrofolate interconversion. This chain is Formate--tetrahydrofolate ligase, found in Cereibacter sphaeroides (strain KD131 / KCTC 12085) (Rhodobacter sphaeroides).